The chain runs to 322 residues: GTP 3',8-cyclase (322 aa).

The 226-residue stretch at 4–229 (NFNRNIDYLR…IPVQMKKSGP (226 aa)) folds into the Radical SAM core domain. R13 serves as a coordination point for GTP. [4Fe-4S] cluster-binding residues include C20 and C24. Residue Y26 coordinates S-adenosyl-L-methionine. A [4Fe-4S] cluster-binding site is contributed by C27. R64 provides a ligand contact to GTP. G68 is an S-adenosyl-L-methionine binding site. T95 lines the GTP pocket. S119 contributes to the S-adenosyl-L-methionine binding site. K156 contacts GTP. M190 contacts S-adenosyl-L-methionine. Positions 253 and 256 each coordinate [4Fe-4S] cluster. GTP is bound at residue 258-260 (RLR). C270 is a binding site for [4Fe-4S] cluster.

This sequence belongs to the radical SAM superfamily. MoaA family. Monomer and homodimer. Requires [4Fe-4S] cluster as cofactor.

It catalyses the reaction GTP + AH2 + S-adenosyl-L-methionine = (8S)-3',8-cyclo-7,8-dihydroguanosine 5'-triphosphate + 5'-deoxyadenosine + L-methionine + A + H(+). Its pathway is cofactor biosynthesis; molybdopterin biosynthesis. Functionally, catalyzes the cyclization of GTP to (8S)-3',8-cyclo-7,8-dihydroguanosine 5'-triphosphate. The chain is GTP 3',8-cyclase from Thermodesulfovibrio yellowstonii (strain ATCC 51303 / DSM 11347 / YP87).